Here is a 224-residue protein sequence, read N- to C-terminus: 7-cyano-7-deazaguanine synthase (224 aa).

ATP is bound at residue 12 to 22; that stretch reads LSGGLDSSTVT. Residues Cys193, Cys201, Cys204, and Cys207 each contribute to the Zn(2+) site.

It belongs to the QueC family. The cofactor is Zn(2+).

It catalyses the reaction 7-carboxy-7-deazaguanine + NH4(+) + ATP = 7-cyano-7-deazaguanine + ADP + phosphate + H2O + H(+). The protein operates within purine metabolism; 7-cyano-7-deazaguanine biosynthesis. Functionally, catalyzes the ATP-dependent conversion of 7-carboxy-7-deazaguanine (CDG) to 7-cyano-7-deazaguanine (preQ(0)). This chain is 7-cyano-7-deazaguanine synthase, found in Prochlorococcus marinus (strain MIT 9301).